We begin with the raw amino-acid sequence, 425 residues long: Gamma-glutamyl phosphate reductase (425 aa).

The protein belongs to the gamma-glutamyl phosphate reductase family.

The protein localises to the cytoplasm. The enzyme catalyses L-glutamate 5-semialdehyde + phosphate + NADP(+) = L-glutamyl 5-phosphate + NADPH + H(+). It participates in amino-acid biosynthesis; L-proline biosynthesis; L-glutamate 5-semialdehyde from L-glutamate: step 2/2. Its function is as follows. Catalyzes the NADPH-dependent reduction of L-glutamate 5-phosphate into L-glutamate 5-semialdehyde and phosphate. The product spontaneously undergoes cyclization to form 1-pyrroline-5-carboxylate. This Opitutus terrae (strain DSM 11246 / JCM 15787 / PB90-1) protein is Gamma-glutamyl phosphate reductase.